The primary structure comprises 218 residues: MRLILLGPPGAGKGTQAAFLTQHYGIPQISTGDMLRAAVKAGTPLGLEAKKVMDAGGLVSDDLIIGLVRDRLTQPDCANGYLFDGFPRTIPQADALKSAGIALDYVVEIEVPESDIIERMSERRVHPASGRSYHVRFNPPKAEGVDDVTGEPLVQRDDDREETVRHRLNVYQNQTRPLVDYYSSWAQSDAAAAPKYRKISGVGSVDEIKSRLSQALQS.

10–15 is a binding site for ATP; sequence GAGKGT. An NMP region spans residues 30–59; it reads STGDMLRAAVKAGTPLGLEAKKVMDAGGLV. AMP is bound by residues T31, R36, 57-59, 85-88, and Q92; these read GLV and GFPR. The interval 122–159 is LID; sequence ERRVHPASGRSYHVRFNPPKAEGVDDVTGEPLVQRDDD. Residues R123 and 132–133 contribute to the ATP site; that span reads SY. Residues R156 and R167 each coordinate AMP. G203 is an ATP binding site.

This sequence belongs to the adenylate kinase family. Monomer.

It is found in the cytoplasm. The enzyme catalyses AMP + ATP = 2 ADP. It functions in the pathway purine metabolism; AMP biosynthesis via salvage pathway; AMP from ADP: step 1/1. Functionally, catalyzes the reversible transfer of the terminal phosphate group between ATP and AMP. Plays an important role in cellular energy homeostasis and in adenine nucleotide metabolism. The protein is Adenylate kinase of Bordetella pertussis (strain Tohama I / ATCC BAA-589 / NCTC 13251).